We begin with the raw amino-acid sequence, 570 residues long: Adenine deaminase (570 aa).

It belongs to the metallo-dependent hydrolases superfamily. Adenine deaminase family. The cofactor is Mn(2+).

It catalyses the reaction adenine + H2O + H(+) = hypoxanthine + NH4(+). The chain is Adenine deaminase from Clostridium acetobutylicum (strain ATCC 824 / DSM 792 / JCM 1419 / IAM 19013 / LMG 5710 / NBRC 13948 / NRRL B-527 / VKM B-1787 / 2291 / W).